We begin with the raw amino-acid sequence, 110 residues long: CHH-like protein (110 aa).

An N-terminal signal peptide occupies residues 1-23 (MHLSSVQFAWAALVALAVSAAGA). A propeptide spanning residues 24 to 35 (LPSSAPHHVERR) is cleaved from the precursor. 3 disulfide bridges follow: Cys42-Cys78, Cys58-Cys74, and Cys61-Cys87. Val107 is modified (valine amide).

Belongs to the arthropod CHH/MIH/GIH/VIH hormone family.

The protein localises to the secreted. The sequence is that of CHH-like protein (CHHL) from Bombyx mori (Silk moth).